Consider the following 274-residue polypeptide: Karrikin insensitive 2 receptor IA (274 aa).

Residue Ser95 is the Nucleophile of the active site. Active-site residues include Asp217 and His246.

The protein belongs to the AB hydrolase superfamily. In terms of assembly, interacts with MAX2A and MAX2B in the presence of (-)-germacrene D, thus forming an E3 SCF ubiquitin ligase complex (ASK-cullin-F-box) containing MAX2A or MAX2B and KAI2IA recognizing SMAX1A; this leads to the subsequent degradation of the transcriptional corepressor SMAX1A, thus triggering the activation of a downstream signaling cascade. In terms of tissue distribution, strongly expressed in stigma.

The protein localises to the nucleus. It is found in the cytoplasm. Hydrolysis activity toward yoshimulactone green (YLG), a fluorescent agonist to strigolactone receptor, is inhibited by (-)-germacrene D and GR24, a synthetic strigolactone analog. In terms of biological role, hydrolase involved in the olfaction of sesquiterpene volatile organic compounds (VOCs) during volatile plant communication in a MAX2 proteins-dependent manner. Acts as a karrikin-insensitive receptor that stereospecifically perceives and binds to (-)-germacrene D, particularly in stigmas, and triggers a signaling cascade influencing plant fitness, as the result of reproductive organ growth-promoting effect; this process involves an interaction with MAX2 proteins (e.g. MAX2A and MAX2B) and the subsequent degradation of SMAX1a, a transcriptional corepressor. The sequence is that of Karrikin insensitive 2 receptor IA from Petunia hybrida (Petunia).